The chain runs to 186 residues: Adenylyl-sulfate kinase (186 aa).

Residue 17 to 24 (GLSGAGKT) participates in ATP binding. Catalysis depends on Ser-91, which acts as the Phosphoserine intermediate.

Belongs to the APS kinase family.

It catalyses the reaction adenosine 5'-phosphosulfate + ATP = 3'-phosphoadenylyl sulfate + ADP + H(+). It functions in the pathway sulfur metabolism; hydrogen sulfide biosynthesis; sulfite from sulfate: step 2/3. In terms of biological role, catalyzes the synthesis of activated sulfate. The chain is Adenylyl-sulfate kinase from Chloroflexus aurantiacus (strain ATCC 29364 / DSM 637 / Y-400-fl).